A 414-amino-acid chain; its full sequence is Dihydroorotase (414 aa).

The Zn(2+) site is built by H56 and H58. Substrate contacts are provided by residues H58–R60 and N90. K138, H171, H219, and D280 together coordinate Zn(2+). K138 carries the post-translational modification N6-carboxylysine. Residue D280 is part of the active site. Position 284 (H284) interacts with substrate.

The protein belongs to the metallo-dependent hydrolases superfamily. DHOase family. Class I DHOase subfamily. Zn(2+) serves as cofactor.

The catalysed reaction is (S)-dihydroorotate + H2O = N-carbamoyl-L-aspartate + H(+). It participates in pyrimidine metabolism; UMP biosynthesis via de novo pathway; (S)-dihydroorotate from bicarbonate: step 3/3. In terms of biological role, catalyzes the reversible cyclization of carbamoyl aspartate to dihydroorotate. This is Dihydroorotase from Thermoplasma acidophilum (strain ATCC 25905 / DSM 1728 / JCM 9062 / NBRC 15155 / AMRC-C165).